Reading from the N-terminus, the 157-residue chain is METLKSKTKTRVLPSWMTAPVDERKVVSVKTATRKQTAAWAQRVGAATRAPATETVYCMNEAEMVDVALGILIEGRKQEKPWEQRSLEATDKLQLSPPCSSSPGSSSEEEDSRISSLAPGLSPPRGPEASDSPCSRSPEEEKEEEDALKYVREIFFS.

Met1 is modified (N-acetylmethionine). Positions 1–21 (METLKSKTKTRVLPSWMTAPV) match the KBM motif. A compositionally biased stretch (basic and acidic residues) spans 80–91 (KPWEQRSLEATD). The disordered stretch occupies residues 80-148 (KPWEQRSLEA…EEEKEEEDAL (69 aa)). Residues 96–106 (SPPCSSSPGSS) show a composition bias toward low complexity. An XLM motif is present at residues 147 to 157 (ALKYVREIFFS).

Interacts (via KBM motif) with XRCC5/Ku80 and XRCC6/Ku70 heterodimer. Interacts (via XLF motif) with TRIM28/KAP1, ATM, MRE11, NBN and RAD50. Interacts with splicing factor SF3B1. Interacts with ERCC6L2; this interaction is DNA independent.

Its subcellular location is the cytoplasm. The protein resides in the nucleus. It localises to the chromosome. Its function is as follows. Cell-cycle-specific regulator of classical non-homologous end joining (NHEJ) of DNA double-strand break (DSB) repair, which can act both as an activator or inhibitor of NHEJ, depending on the cell cycle phase. Acts as a regulator of DNA repair pathway choice by specifically inhibiting classical NHEJ during the S and G2 phases, thereby promoting error-free repair by homologous recombination during cell cycle phases when sister chromatids are present. Preferentially protects single-stranded overhangs at break sites by inhibiting classical NHEJ, thereby creating a local environment that favors homologous recombination. Acts via interaction with XRCC5/Ku80 and XRCC6/Ku70. In contrast, acts as an activator of NHEJ during G1 phase of the cell cycle: promotes classical NHEJ in G1 phase cells via multivalent interactions that increase the affinity of DNA damage response proteins for DSB-associated chromatin. Also involved in immunoglobulin V(D)J recombination. May also act as an indirect regulator of proteasome. The protein is Cell cycle regulator of non-homologous end joining of Mus musculus (Mouse).